A 269-amino-acid chain; its full sequence is Undecaprenyl-diphosphatase (269 aa).

8 consecutive transmembrane segments (helical) span residues 3–23, 41–61, 78–98, 107–127, 148–167, 184–204, 213–233, and 248–268; these read LLIKAFIMGIVEGLTEFLPIS, FATMFEIVIQLGAILAVVFYY, GFNLWFKIFIAFIPAAVIGLL, LFSPFTVAIALIAGAIMMIVI, SLLIGIAQVMSLFPGMSRSA, AEFSFFLAIPTMFAATTLSLL, LEWQALAVGFITSFLTALFVV, and FAYYRLAVGVLMILLVAEKIV.

Belongs to the UppP family.

Its subcellular location is the cell membrane. It catalyses the reaction di-trans,octa-cis-undecaprenyl diphosphate + H2O = di-trans,octa-cis-undecaprenyl phosphate + phosphate + H(+). Catalyzes the dephosphorylation of undecaprenyl diphosphate (UPP). Confers resistance to bacitracin. The sequence is that of Undecaprenyl-diphosphatase from Thermoanaerobacter sp. (strain X514).